Reading from the N-terminus, the 117-residue chain is Hainantoxin-XV.2 (117 aa).

The signal sequence occupies residues 1–20; that stretch reads MKLCAVIIASLLVCAAVASS. Residues 18-55 are disordered; sequence ASSSDNQKEFAQEKEMTREETQSLGEHEKDDEVTGSEE. The propeptide occupies 21 to 56; that stretch reads SDNQKEFAQEKEMTREETQSLGEHEKDDEVTGSEER. Positions 23-55 are enriched in basic and acidic residues; it reads NQKEFAQEKEMTREETQSLGEHEKDDEVTGSEE. Intrachain disulfides connect cysteine 58/cysteine 72, cysteine 65/cysteine 78, cysteine 69/cysteine 115, and cysteine 71/cysteine 91.

It belongs to the neurotoxin 03 (Tx2) family. 02 subfamily. HNTX-XV sub-subfamily. Expressed by the venom gland.

Its subcellular location is the secreted. Putative ion channel inhibitor. In Cyriopagopus hainanus (Chinese bird spider), this protein is Hainantoxin-XV.2.